The sequence spans 705 residues: Complement C1r subcomponent (705 aa).

The N-terminal stretch at methionine 1 to glycine 17 is a signal peptide. Residues serine 18 to valine 141 enclose the CUB 1 domain. Residues glutamate 66, aspartate 74, and aspartate 119 each coordinate Ca(2+). A disulfide bond links cysteine 71 and cysteine 89. Residue asparagine 125 is glycosylated (N-linked (GlcNAc...) asparagine). Residues aspartate 142, leucine 143, and glutamate 145 each contribute to the Ca(2+) site. Residues aspartate 142 to glutamine 190 enclose the EGF-like; calcium-binding domain. Cystine bridges form between cysteine 146–cysteine 165, cysteine 161–cysteine 174, cysteine 176–cysteine 189, and cysteine 193–cysteine 220. Ca(2+) is bound by residues asparagine 167, tyrosine 168, and glycine 171. Position 167 is a (3R)-3-hydroxyasparagine (asparagine 167). A CUB 2 domain is found at cysteine 193–glutamate 305. At serine 206 the chain carries Phosphoserine; by CK2. Asparagine 221 carries N-linked (GlcNAc...) asparagine glycosylation. Ca(2+) is bound by residues aspartate 243, aspartate 253, aspartate 290, and aspartate 294. A disulfide bridge connects residues cysteine 250 and cysteine 268. Sushi domains lie at isoleucine 307 to isoleucine 373 and lysine 374 to proline 449. Disulfide bonds link cysteine 309-cysteine 358, cysteine 338-cysteine 371, cysteine 376-cysteine 429, cysteine 406-cysteine 447, and cysteine 451-cysteine 577. In terms of domain architecture, Peptidase S1 spans isoleucine 464–glutamate 702. Residue histidine 502 is the Charge relay system of the active site. The N-linked (GlcNAc...) asparagine glycan is linked to asparagine 514. Catalysis depends on aspartate 557, which acts as the Charge relay system. Asparagine 581 carries N-linked (GlcNAc...) asparagine glycosylation. 2 cysteine pairs are disulfide-bonded: cysteine 620–cysteine 639 and cysteine 650–cysteine 680. Residue serine 654 is the Charge relay system of the active site.

Belongs to the peptidase S1 family. In terms of assembly, core component of the complement C1 complex, a calcium-dependent complex composed of 1 molecule of the C1Q subcomplex, 2 molecules of C1R and 2 molecules of C1S. The C1Q subcomplex is composed 18 subunits: 3 chains of C1QA, C1QB, and C1QC trimerize to form 6 collagen-like triple helices connected to six globular ligand-recognition modules. Within the C1 complex, C1R is a dimer of identical chains, each of which is activated by cleavage into two chains, heavy and light, connected by disulfide bonds. In terms of processing, cleaved and activated by autocatalytic processing to generate Complement C1r subcomponent heavy and light chains that are connected by disulfide bonds. The iron and 2-oxoglutarate dependent 3-hydroxylation of aspartate and asparagine is (R) stereospecific within EGF domains.

Its subcellular location is the secreted. The protein resides in the cell surface. It catalyses the reaction Selective cleavage of Lys(or Arg)-|-Ile bond in complement subcomponent C1s to form the active form of C1s (EC 3.4.21.42).. Activated by the C1Q subcomplex of the C1 complex following C1Q binding to immunoglobulins (IgG or IgM) complexed with antigens to form antigen-antibody complexes on the surface of pathogens. Immunoglobulin-binding promotes autoactivation of C1R, which results in the cleavage of the Arg-Ile bond in the catalytic domain. Its function is as follows. Serine protease component of the complement C1 complex, a multiprotein complex that initiates the classical pathway of the complement system, a cascade of proteins that leads to phagocytosis and breakdown of pathogens and signaling that strengthens the adaptive immune system. C1R catalyzes the first enzymatic step in the classical complement pathway: it is activated by the C1Q subcomplex of the C1 complex, which associates with IgG or IgM immunoglobulins complexed with antigens to form antigen-antibody complexes on the surface of pathogens. Immunoglobulin-binding promotes the autocatalytic cleavage and activation of C1R. Activated C1R then cleaves and activates C1S, the second protease of the classical complement pathway. It is unclear if C1R activates C1S within single, strained C1 complexes or between neighboring C1 complexes on surfaces. This chain is Complement C1r subcomponent, found in Homo sapiens (Human).